The sequence spans 475 residues: Bifunctional protein HldE (475 aa).

Residues 1–318 (MMQYSLKFNQ…ENAIHHREET (318 aa)) are ribokinase. 195 to 198 (NMAE) contributes to the ATP binding site. Aspartate 264 is an active-site residue. The segment at 344–475 (MTNGCFDILH…DVIKKIQAIR (132 aa)) is cytidylyltransferase.

In the N-terminal section; belongs to the carbohydrate kinase PfkB family. It in the C-terminal section; belongs to the cytidylyltransferase family. In terms of assembly, homodimer.

It catalyses the reaction D-glycero-beta-D-manno-heptose 7-phosphate + ATP = D-glycero-beta-D-manno-heptose 1,7-bisphosphate + ADP + H(+). It carries out the reaction D-glycero-beta-D-manno-heptose 1-phosphate + ATP + H(+) = ADP-D-glycero-beta-D-manno-heptose + diphosphate. The protein operates within nucleotide-sugar biosynthesis; ADP-L-glycero-beta-D-manno-heptose biosynthesis; ADP-L-glycero-beta-D-manno-heptose from D-glycero-beta-D-manno-heptose 7-phosphate: step 1/4. Its pathway is nucleotide-sugar biosynthesis; ADP-L-glycero-beta-D-manno-heptose biosynthesis; ADP-L-glycero-beta-D-manno-heptose from D-glycero-beta-D-manno-heptose 7-phosphate: step 3/4. It functions in the pathway bacterial outer membrane biogenesis; LOS core biosynthesis. In terms of biological role, catalyzes the phosphorylation of D-glycero-D-manno-heptose 7-phosphate at the C-1 position to selectively form D-glycero-beta-D-manno-heptose-1,7-bisphosphate. Its function is as follows. Catalyzes the ADP transfer from ATP to D-glycero-beta-D-manno-heptose 1-phosphate, yielding ADP-D-glycero-beta-D-manno-heptose. The sequence is that of Bifunctional protein HldE from Haemophilus ducreyi (strain 35000HP / ATCC 700724).